Reading from the N-terminus, the 182-residue chain is Small ribosomal subunit protein uS9 (182 aa).

It belongs to the universal ribosomal protein uS9 family.

The polypeptide is Small ribosomal subunit protein uS9 (Corynebacterium efficiens (strain DSM 44549 / YS-314 / AJ 12310 / JCM 11189 / NBRC 100395)).